Consider the following 75-residue polypeptide: uncharacterized protein (75 aa).

This is an uncharacterized protein from Escherichia coli (Bacteriophage T4).